The following is a 206-amino-acid chain: Putative transporter protein AmiS2 (206 aa).

Transmembrane regions (helical) follow at residues 4–24, 29–49, 56–76, 86–106, 113–133, 142–162, and 173–193; these read VGLLYVGAVLFVNGLMLLGTV, ASVLNLFVGALQCVVPTVMLI, SAVLAASGLYLFGFTYLYVGI, GIGWFSLFVACAALVYSFLSF, VFGVIWLAWAALWTLFFLVLG, FTGWAAILLSQPTCTVPAFLI, and VAAGWAGALLVLLGLAKILAA.

This sequence belongs to the AmiS/UreI family.

It is found in the cell membrane. Its function is as follows. Possible transporter that might be responsible for the adsorption of amidase substrates or release of their hydrolysis products. The sequence is that of Putative transporter protein AmiS2 (amiS2) from Rhodococcus erythropolis (Arthrobacter picolinophilus).